The sequence spans 1668 residues: Chitin synthase chs-2 (1668 aa).

Basic and acidic residues predominate over residues 1-19 (MMNTLDHRPLGRMETMEGK). The segment at 1-51 (MMNTLDHRPLGRMETMEGKPDEDEVPTSSNSDAKGKGYYYSSGTVPTDDST) is disordered. The Cytoplasmic segment spans residues 1 to 116 (MMNTLDHRPL…HGFWHDASLQ (116 aa)). The chain crosses the membrane as a helical span at residues 117–137 (VLKLATFLVLFLLTLGSAVVA). The Extracellular portion of the chain corresponds to 138 to 176 (KSTFILMTSAIGWGGQTITICNQVISEATQNTVKLKNAH). The chain crosses the membrane as a helical span at residues 177 to 197 (VVKWVWATLLALSAPEALCFV). Residues 198–212 (RSMHRTMFRNVKRPT) are Cytoplasmic-facing. Residues 213–233 (FIQFVFVLIIETFHSIGVGIL) form a helical membrane-spanning segment. Residues 234-242 (VFRIFPDLD) are Extracellular-facing. The chain crosses the membrane as a helical span at residues 243 to 263 (AVTAAQLTNAMCFVPAILSVI). The Cytoplasmic segment spans residues 264-271 (SRKPNKSA). The helical transmembrane segment at 272–292 (LLLVIIDFAAIAAQSSGFWAL) threads the bilayer. Topologically, residues 293-301 (PMFLPNLQK) are extracellular. The helical transmembrane segment at 302–322 (HLVAIPVSLTLISLAWWQNFV) threads the bilayer. At 323 to 347 (HRDSVFPPVRTLAKFAQRLSERRSK) the chain is on the cytoplasmic side. A helical membrane pass occupies residues 348 to 368 (TYAFVSLWKICIYVVCCFLFI). Topologically, residues 369 to 487 (SSRMKIEDML…IYSNYVERNQ (119 aa)) are extracellular. N-linked (GlcNAc...) asparagine glycosylation is present at Asn396. A helical transmembrane segment spans residues 488–508 (LTMAYDALWLVIFQFGAVFVC). The Cytoplasmic segment spans residues 509–522 (YHSSKFACKVMMQR). The helical transmembrane segment at 523-543 (MGFALPMALSVPVTVLLLSTN) threads the bilayer. Residues 544 to 576 (CRMRQKDSCYGTNVLTVELFWQCNGASMSLADF) are Extracellular-facing. A helical membrane pass occupies residues 577-597 (ILTPQTWIWLCWLASQFWITI). Topologically, residues 598 to 1045 (HLWNPKHERL…ISIWYIIYQL (448 aa)) are cytoplasmic. Residues 1046 to 1066 (VMLISSILGPGTIFVMIIGAI) form a helical membrane-spanning segment. Topologically, residues 1067-1074 (SISFSIDT) are extracellular. Residues 1075–1095 (LISLVIVSIPVVVFIVVCLTA) form a helical membrane-spanning segment. The Cytoplasmic portion of the chain corresponds to 1096-1100 (KPEHQ). A helical transmembrane segment spans residues 1101–1121 (LICAQTIGAIFAMLMTAVVVG). Over 1122 to 1136 (TSLQLQKDGLLSPHS) the chain is Extracellular. The helical transmembrane segment at 1137–1157 (MFTVAVATSFLTAAILHPLEF) threads the bilayer. A topological domain (cytoplasmic) is located at residue Thr1158. Residues 1159-1179 (CIIPGTIYFLAIPCMYMLLPI) form a helical membrane-spanning segment. Residues 1180–1375 (YSVCNMHTVS…RAGLIAIRNS (196 aa)) are Extracellular-facing. A disordered region spans residues 1192–1216 (TREDPRPTEKNTLAKKTPGNLESGD). Positions 1280-1335 (QIDKCSEADEDEQAEIEDALEMSNQSHAAKKNQKWKQAQSEAWLADKALKRAEREY) form a coiled coil. N-linked (GlcNAc...) asparagine glycosylation occurs at Asn1303. The helical transmembrane segment at 1376–1396 (HTVYFLMINIVFIISVLVLQI) threads the bilayer. The Cytoplasmic segment spans residues 1397 to 1440 (HKDCLNIEWPLGPKFNHTVRPCYANHDDNQKEEVWVMTRLQLEP). A helical transmembrane segment spans residues 1441–1461 (IGLVFLIFFVSILVIQFLAML). Residues 1462 to 1668 (CHRFGTLAHI…SSGDVELRRF (207 aa)) lie on the Extracellular side of the membrane. The segment at 1625 to 1668 (RLFTAQQDQNSPTSDGNRRKSNSRPWDQPTSSATSSGDVELRRF) is disordered. 2 stretches are compositionally biased toward polar residues: residues 1628–1639 (TAQQDQNSPTSD) and 1647–1661 (SRPW…TSSG).

Belongs to the chitin synthase family. Class IV subfamily.

Its subcellular location is the cell membrane. The enzyme catalyses [(1-&gt;4)-N-acetyl-beta-D-glucosaminyl](n) + UDP-N-acetyl-alpha-D-glucosamine = [(1-&gt;4)-N-acetyl-beta-D-glucosaminyl](n+1) + UDP + H(+). May be involved in chitin synthesis in the pharynx during larval development. The sequence is that of Chitin synthase chs-2 from Caenorhabditis elegans.